The chain runs to 1829 residues: Iron-regulated protein FrpC (1829 aa).

Hemolysin-type calcium-binding repeat units follow at residues 869–886 (FGHNKNVSLYGNDGNDTL), 887–904 (IGGAGNDYLEGGSGSDTY), 1015–1032 (NGGLGDDYLYGADGDDLL), 1033–1050 (NGDAGNDSIYSGNGNDTL), 1051–1068 (NGGEGNDALYGYNGNDAL), 1069–1086 (NGGEGNDHLNGEDGNDTL), 1087–1104 (IGGAGNDYLEGGSGSDTY), 1215–1232 (NGGLGDDYLYGADGDDLL), 1233–1250 (NGDAGNDSIYSGNGNDTL), 1251–1268 (DGGEGNDALYGYNGNDAL), 1269–1286 (NGGEGNDHLNGEDGNDTL), 1287–1304 (IGGAGNDYLEGGSGSDTY), 1415–1432 (NGGLGDDYLYGADGDDLL), 1433–1450 (NGDAGNDSIYSGNGNDTL), 1451–1468 (DGGEGNDALYGYNGNDAL), 1469–1486 (NGGEGNDHLNGEDGNDTL), 1487–1504 (IGGAGNDYLEGGSGSDTY), 1615–1632 (NGGLGDDYLYGADGDDLL), 1633–1650 (NGDAGNDSIYSGNGNDTL), 1651–1668 (NGGEGNDALYGYNGNDVL), 1669–1686 (NGGEGNDHLNGEDGNDTL), and 1687–1704 (IGGAGNDYLEGGSGSDTY).

It belongs to the RTX prokaryotic toxin (TC 1.C.11) family.

It is found in the cell outer membrane. The protein resides in the secreted. May participate in the pathogenesis of meningococcal disease. The sequence is that of Iron-regulated protein FrpC (frpC) from Neisseria meningitidis serogroup C.